Reading from the N-terminus, the 84-residue chain is Small ribosomal subunit protein bS20 (84 aa).

The protein belongs to the bacterial ribosomal protein bS20 family.

Its function is as follows. Binds directly to 16S ribosomal RNA. This Ligilactobacillus salivarius (strain UCC118) (Lactobacillus salivarius) protein is Small ribosomal subunit protein bS20.